The chain runs to 359 residues: Probable isoaspartyl peptidase/L-asparaginase 3 (359 aa).

T224 acts as the Nucleophile in catalysis. Substrate contacts are provided by residues 252–255 and 275–278; these read RVGD and TGDG.

The protein belongs to the Ntn-hydrolase family. In terms of assembly, heterotetramer of two alpha and two beta chains arranged as a dimer of alpha/beta heterodimers. In terms of processing, cleaved into an alpha and beta chain by autocatalysis; this activates the enzyme. The N-terminal residue of the beta subunit is responsible for the nucleophile hydrolase activity.

It catalyses the reaction Cleavage of a beta-linked Asp residue from the N-terminus of a polypeptide.. Functionally, acts in asparagine catabolism but also in the final steps of protein degradation via hydrolysis of a range of isoaspartyl dipeptides. This is Probable isoaspartyl peptidase/L-asparaginase 3 from Arabidopsis thaliana (Mouse-ear cress).